Consider the following 186-residue polypeptide: Bis(5'-nucleosyl)-tetraphosphatase, symmetrical (186 aa).

The HD domain maps to 18–132; sequence RYIHTVGVMN…IYVADYIEPN (115 aa). His-21 contacts ADP. His-21, His-50, and Asp-51 together coordinate Fe cation. ADP-binding positions include 51–54, His-83, 109–110, Asp-127, Arg-133, and 170–175; these read DYAK, HT, and PVFPDT. A Fe cation-binding site is contributed by Asp-127.

This sequence belongs to the Ap4A hydrolase YqeK family. In terms of assembly, homodimer.

It carries out the reaction P(1),P(4)-bis(5'-adenosyl) tetraphosphate + H2O = 2 ADP + 2 H(+). Functionally, hydrolyzes diadenosine 5',5'''-P1,P4-tetraphosphate (Ap4A) to yield ADP. This is Bis(5'-nucleosyl)-tetraphosphatase, symmetrical (yqeK) from Bacillus subtilis (strain 168).